Consider the following 370-residue polypeptide: Histidinol-phosphate aminotransferase (370 aa).

Lys229 carries the post-translational modification N6-(pyridoxal phosphate)lysine.

The protein belongs to the class-II pyridoxal-phosphate-dependent aminotransferase family. Histidinol-phosphate aminotransferase subfamily. In terms of assembly, homodimer. Pyridoxal 5'-phosphate is required as a cofactor.

The catalysed reaction is L-histidinol phosphate + 2-oxoglutarate = 3-(imidazol-4-yl)-2-oxopropyl phosphate + L-glutamate. Its pathway is amino-acid biosynthesis; L-histidine biosynthesis; L-histidine from 5-phospho-alpha-D-ribose 1-diphosphate: step 7/9. This Helicobacter hepaticus (strain ATCC 51449 / 3B1) protein is Histidinol-phosphate aminotransferase.